The sequence spans 513 residues: Lysine--tRNA ligase (513 aa).

Mg(2+) contacts are provided by Glu423 and Glu430.

The protein belongs to the class-II aminoacyl-tRNA synthetase family. As to quaternary structure, homodimer. Requires Mg(2+) as cofactor.

The protein resides in the cytoplasm. The enzyme catalyses tRNA(Lys) + L-lysine + ATP = L-lysyl-tRNA(Lys) + AMP + diphosphate. The polypeptide is Lysine--tRNA ligase (Anaeromyxobacter dehalogenans (strain 2CP-C)).